The sequence spans 207 residues: Dephospho-CoA kinase (207 aa).

Residues 10–207 enclose the DPCK domain; the sequence is ILGLTGGIGS…FYLTLKGGQP (198 aa). 18 to 23 is an ATP binding site; sequence GSGKSA.

The protein belongs to the CoaE family.

The protein localises to the cytoplasm. The catalysed reaction is 3'-dephospho-CoA + ATP = ADP + CoA + H(+). It participates in cofactor biosynthesis; coenzyme A biosynthesis; CoA from (R)-pantothenate: step 5/5. Catalyzes the phosphorylation of the 3'-hydroxyl group of dephosphocoenzyme A to form coenzyme A. In Pseudomonas putida (strain ATCC 47054 / DSM 6125 / CFBP 8728 / NCIMB 11950 / KT2440), this protein is Dephospho-CoA kinase.